Reading from the N-terminus, the 464-residue chain is Glycine--tRNA ligase (464 aa).

Arginine 104 and glutamate 175 together coordinate substrate. Residues arginine 207–glutamate 209, phenylalanine 217–phenylalanine 222, glutamate 292–leucine 293, and glycine 336–arginine 339 contribute to the ATP site. Phenylalanine 222 to glutamate 226 contributes to the substrate binding site. Glutamate 332–glycine 336 contacts substrate.

Belongs to the class-II aminoacyl-tRNA synthetase family. In terms of assembly, homodimer.

It localises to the cytoplasm. It carries out the reaction tRNA(Gly) + glycine + ATP = glycyl-tRNA(Gly) + AMP + diphosphate. Catalyzes the attachment of glycine to tRNA(Gly). The sequence is that of Glycine--tRNA ligase from Leptospira interrogans serogroup Icterohaemorrhagiae serovar copenhageni (strain Fiocruz L1-130).